The sequence spans 398 residues: 1-deoxy-D-xylulose 5-phosphate reductoisomerase (398 aa).

T10, G11, S12, I13, G36, K37, N38, and N124 together coordinate NADPH. K125 contacts 1-deoxy-D-xylulose 5-phosphate. An NADPH-binding site is contributed by E126. D150 is a binding site for Mn(2+). Residues S151, E152, S186, and H209 each coordinate 1-deoxy-D-xylulose 5-phosphate. Mn(2+) is bound at residue E152. G215 serves as a coordination point for NADPH. Positions 222, 227, 228, and 231 each coordinate 1-deoxy-D-xylulose 5-phosphate. E231 contacts Mn(2+).

It belongs to the DXR family. Homodimer. It depends on Mg(2+) as a cofactor. Requires Mn(2+) as cofactor.

It carries out the reaction 2-C-methyl-D-erythritol 4-phosphate + NADP(+) = 1-deoxy-D-xylulose 5-phosphate + NADPH + H(+). Its pathway is isoprenoid biosynthesis; isopentenyl diphosphate biosynthesis via DXP pathway; isopentenyl diphosphate from 1-deoxy-D-xylulose 5-phosphate: step 1/6. Its function is as follows. Catalyzes the NADPH-dependent rearrangement and reduction of 1-deoxy-D-xylulose-5-phosphate (DXP) to 2-C-methyl-D-erythritol 4-phosphate (MEP). The chain is 1-deoxy-D-xylulose 5-phosphate reductoisomerase from Escherichia coli O157:H7.